Consider the following 106-residue polypeptide: UPF0145 protein BH0643 (106 aa).

This sequence belongs to the UPF0145 family.

The protein is UPF0145 protein BH0643 of Halalkalibacterium halodurans (strain ATCC BAA-125 / DSM 18197 / FERM 7344 / JCM 9153 / C-125) (Bacillus halodurans).